We begin with the raw amino-acid sequence, 144 residues long: Globin (144 aa).

An N-acetylalanine modification is found at Ala-1. The region spanning 1–144 (ALSAADAGLL…IISALQSAGK (144 aa)) is the Globin domain. A heme b-binding site is contributed by His-95.

This sequence belongs to the globin family. Monomer.

The protein is Globin of Aplysia juliana (Walking sea hare).